The sequence spans 151 residues: C-C motif chemokine 25 (151 aa).

An N-terminal signal peptide occupies residues M1–A23. Intrachain disulfides connect C30/C58 and C31/C75. The disordered stretch occupies residues R93–P151.

The protein belongs to the intercrine beta (chemokine CC) family.

It localises to the secreted. Functionally, potentially involved in T-cell development. Recombinant protein shows chemotactic activity on thymocytes, macrophages, THP-1 cells, and dendritics cells but is inactive on peripheral blood lymphocytes and neutrophils. Binds to CCR9. Binds to atypical chemokine receptor ACKR4 and mediates the recruitment of beta-arrestin (ARRB1/2) to ACKR4. The chain is C-C motif chemokine 25 (CCL25) from Sus scrofa (Pig).